Consider the following 162-residue polypeptide: Large ribosomal subunit protein uL15 (162 aa).

Positions 1-18 are enriched in basic and acidic residues; the sequence is MKLNEIRDNEGATKDRMR. The segment at 1 to 42 is disordered; it reads MKLNEIRDNEGATKDRMRVGRGIGSGKGKTAGRGVKGQKART. Positions 21 to 35 are enriched in gly residues; sequence RGIGSGKGKTAGRGV.

It belongs to the universal ribosomal protein uL15 family. Part of the 50S ribosomal subunit.

In terms of biological role, binds to the 23S rRNA. The chain is Large ribosomal subunit protein uL15 from Methylobacterium sp. (strain 4-46).